The chain runs to 124 residues: Large ribosomal subunit protein bL12 (124 aa).

The protein belongs to the bacterial ribosomal protein bL12 family. Homodimer. Part of the ribosomal stalk of the 50S ribosomal subunit. Forms a multimeric L10(L12)X complex, where L10 forms an elongated spine to which 2 to 4 L12 dimers bind in a sequential fashion. Binds GTP-bound translation factors.

Forms part of the ribosomal stalk which helps the ribosome interact with GTP-bound translation factors. Is thus essential for accurate translation. This chain is Large ribosomal subunit protein bL12, found in Jannaschia sp. (strain CCS1).